The chain runs to 328 residues: Homoarginine-6-hydroxylase 2-ODD-233 (328 aa).

The region spanning 183–288 is the Fe2OG dioxygenase domain; that stretch reads FWVCRLIGYP…VSVAFFYESN (106 aa). Positions 210, 212, and 268 each coordinate Fe cation. Arg278 serves as a coordination point for 2-oxoglutarate.

It belongs to the iron/ascorbate-dependent oxidoreductase family. The cofactor is Fe(2+). L-ascorbate is required as a cofactor. Expressed in roots and shoots.

Its subcellular location is the cytoplasm. The enzyme catalyses L-homoarginine + 2-oxoglutarate + O2 = 6-hydroxy-L-homoarginine + succinate + CO2. It catalyses the reaction melatonin + 2-oxoglutarate + O2 = 2-hydroxymelatonin + succinate + CO2. Functionally, 2-oxoglutarate-dependent dioxygenase catalyzing homoarginine 6-hydroxylation thus producing 6-hydroxy-L-homoarginine. Guanidine (Gd) is in turn synthesized by the spontaneous conversion of 6-hydroxy-L-homoarginine to (S)-2-amino-6-oxohexanoate (RHEA:79843); guanidine is a nitrogen-rich compound that can serve as a defense or signaling substance. Involved in melatonin degradation. Catalyzes the hydroxylation of melatonin to produce 2-hydroxymelatonin. The protein is Homoarginine-6-hydroxylase 2-ODD-233 of Oryza sativa subsp. japonica (Rice).